Consider the following 98-residue polypeptide: Defensin-A (98 aa).

The signal sequence occupies residues 1-18; that stretch reads MKSITVICFLALCTVAIT. Positions 19 to 58 are excised as a propeptide; that stretch reads SAYPQEPVLADEARPFANSLFDELPEETYQAAVENFRLKR. Cystine bridges form between Cys-61-Cys-88, Cys-74-Cys-94, and Cys-78-Cys-96.

This sequence belongs to the invertebrate defensin family. Type 1 subfamily.

The protein localises to the secreted. Functionally, antibacterial peptide mostly active against Gram-positive bacteria. Has activity against the bacteria Gram-negative E.cloacae beta12. The sequence is that of Defensin-A (DEFA) from Aedes aegypti (Yellowfever mosquito).